A 276-amino-acid chain; its full sequence is L-aminoadipate-semialdehyde dehydrogenase-phosphopantetheinyl transferase (276 aa).

Belongs to the P-Pant transferase superfamily. AcpS family.

The catalysed reaction is apo-[ACP] + CoA = holo-[ACP] + adenosine 3',5'-bisphosphate + H(+). In terms of biological role, catalyzes the transfer of a 4'-phosphopantetheine moiety from coenzyme A to a serine residue of acceptor proteins, such as alpha-aminoadipate reductase. Necessary for alpha-aminoadipate reductase activity. The sequence is that of L-aminoadipate-semialdehyde dehydrogenase-phosphopantetheinyl transferase (LYS5) from Eremothecium gossypii (strain ATCC 10895 / CBS 109.51 / FGSC 9923 / NRRL Y-1056) (Yeast).